Consider the following 202-residue polypeptide: Small ribosomal subunit protein uS5 (202 aa).

Residues 46-109 enclose the S5 DRBM domain; it reads LKSEVLSVGF…RRAKLNIVPV (64 aa).

The protein belongs to the universal ribosomal protein uS5 family. Part of the 30S ribosomal subunit. Contacts protein S4.

With S4 and S12 plays an important role in translational accuracy. In Thermofilum pendens (strain DSM 2475 / Hrk 5), this protein is Small ribosomal subunit protein uS5.